A 584-amino-acid polypeptide reads, in one-letter code: Sulfite reductase [NADPH] hemoprotein beta-component (584 aa).

[4Fe-4S] cluster-binding residues include Cys-447, Cys-453, Cys-492, and Cys-496. Cys-496 contacts siroheme.

This sequence belongs to the nitrite and sulfite reductase 4Fe-4S domain family. Alpha(8)-beta(8). The alpha component is a flavoprotein, the beta component is a hemoprotein. Requires siroheme as cofactor. [4Fe-4S] cluster is required as a cofactor.

It catalyses the reaction hydrogen sulfide + 3 NADP(+) + 3 H2O = sulfite + 3 NADPH + 4 H(+). It participates in sulfur metabolism; hydrogen sulfide biosynthesis; hydrogen sulfide from sulfite (NADPH route): step 1/1. Component of the sulfite reductase complex that catalyzes the 6-electron reduction of sulfite to sulfide. This is one of several activities required for the biosynthesis of L-cysteine from sulfate. The protein is Sulfite reductase [NADPH] hemoprotein beta-component of Colwellia psychrerythraea (strain 34H / ATCC BAA-681) (Vibrio psychroerythus).